A 117-amino-acid chain; its full sequence is Large ribosomal subunit protein bL20c (117 aa).

This sequence belongs to the bacterial ribosomal protein bL20 family.

The protein resides in the plastid. Its subcellular location is the chloroplast. Binds directly to 23S ribosomal RNA and is necessary for the in vitro assembly process of the 50S ribosomal subunit. It is not involved in the protein synthesizing functions of that subunit. This Lemna minor (Common duckweed) protein is Large ribosomal subunit protein bL20c.